Here is a 125-residue protein sequence, read N- to C-terminus: UPF0389 protein CG9231 (125 aa).

Residues 69 to 88 form a helical membrane-spanning segment; the sequence is IRLANIMIALTAVGCAIMVY. Asparagine 112 carries N-linked (GlcNAc...) asparagine glycosylation.

Belongs to the UPF0389 family.

Its subcellular location is the membrane. This is UPF0389 protein CG9231 from Drosophila melanogaster (Fruit fly).